Here is a 249-residue protein sequence, read N- to C-terminus: Pleckstrin homology domain-containing family F member 2 (249 aa).

Position 16 is a phosphoserine (Ser-16). The PH domain maps to 35–131; that stretch reads VLIGEGVLTK…WMNHINKCVT (97 aa). Lys-44 is modified (N6-acetyllysine). Residues 152–212 form an FYVE-type zinc finger; that stretch reads DSEATVCMRC…ICDFCYDLLS (61 aa). Cys-158, Cys-161, Cys-175, Cys-178, Cys-183, Cys-186, Cys-204, and Cys-207 together coordinate Zn(2+). A compositionally biased stretch (polar residues) spans 221 to 233; the sequence is PTRSDSYSQSLKS. A disordered region spans residues 221-249; it reads PTRSDSYSQSLKSPLNDASDDDDDDDSSD. Residues 238-249 are compositionally biased toward acidic residues; sequence ASDDDDDDDSSD. Ser-239 and Ser-248 each carry phosphoserine.

In terms of assembly, may interact with EEA1. As to expression, expressed in brain, stomach and thymus, as well as in kidney, spleen, and skeletal muscle. Also expressed in peripheral blood mononuclear cells and dendritic cells.

It is found in the early endosome membrane. It localises to the endoplasmic reticulum. In terms of biological role, may play a role in early endosome fusion upstream of RAB5, hence regulating receptor trafficking and fluid-phase transport. Enhances cellular sensitivity to TNF-induced apoptosis. This chain is Pleckstrin homology domain-containing family F member 2 (Plekhf2), found in Mus musculus (Mouse).